The primary structure comprises 100 residues: Cell division topological specificity factor (100 aa).

Belongs to the MinE family.

Prevents the cell division inhibition by proteins MinC and MinD at internal division sites while permitting inhibition at polar sites. This ensures cell division at the proper site by restricting the formation of a division septum at the midpoint of the long axis of the cell. The protein is Cell division topological specificity factor of Synechococcus sp. (strain JA-2-3B'a(2-13)) (Cyanobacteria bacterium Yellowstone B-Prime).